We begin with the raw amino-acid sequence, 174 residues long: MNRTEKEQVIGELHEKMAMAKAAILAEPKGLNVATVTELRRKLREAKVEYRIVKNTLAARAAKGTPVESIAEKFVGPTALVMSYDDVVTPAKLLADFMKDRENFTIRTAVIEGRVVDAKGIQSLAKMPGLQELRGQIAAMIAQPATQLARVLGAPGQQLARVLGARREQLEKQS.

The protein belongs to the universal ribosomal protein uL10 family. Part of the ribosomal stalk of the 50S ribosomal subunit. The N-terminus interacts with L11 and the large rRNA to form the base of the stalk. The C-terminus forms an elongated spine to which L12 dimers bind in a sequential fashion forming a multimeric L10(L12)X complex.

In terms of biological role, forms part of the ribosomal stalk, playing a central role in the interaction of the ribosome with GTP-bound translation factors. The chain is Large ribosomal subunit protein uL10 from Anaeromyxobacter sp. (strain Fw109-5).